We begin with the raw amino-acid sequence, 131 residues long: Small ribosomal subunit protein uS8 (131 aa).

The protein belongs to the universal ribosomal protein uS8 family. In terms of assembly, part of the 30S ribosomal subunit. Contacts proteins S5 and S12.

Its function is as follows. One of the primary rRNA binding proteins, it binds directly to 16S rRNA central domain where it helps coordinate assembly of the platform of the 30S subunit. This chain is Small ribosomal subunit protein uS8, found in Campylobacter hominis (strain ATCC BAA-381 / DSM 21671 / CCUG 45161 / LMG 19568 / NCTC 13146 / CH001A).